A 724-amino-acid chain; its full sequence is Catalase-peroxidase (724 aa).

Positions 98–226 (WHAAGTYRIA…LAAVMMGLIY (129 aa)) form a cross-link, tryptophyl-tyrosyl-methioninium (Trp-Tyr) (with M-252). His99 serves as the catalytic Proton acceptor. A cross-link (tryptophyl-tyrosyl-methioninium (Tyr-Met) (with W-98)) is located at residues 226–252 (YVNPEGVDGNPDPLKTAHDIRVTFERM). His267 contributes to the heme b binding site.

This sequence belongs to the peroxidase family. Peroxidase/catalase subfamily. Homodimer or homotetramer. Requires heme b as cofactor. In terms of processing, formation of the three residue Trp-Tyr-Met cross-link is important for the catalase, but not the peroxidase activity of the enzyme.

The enzyme catalyses H2O2 + AH2 = A + 2 H2O. It catalyses the reaction 2 H2O2 = O2 + 2 H2O. In terms of biological role, bifunctional enzyme with both catalase and broad-spectrum peroxidase activity. The polypeptide is Catalase-peroxidase (Psychromonas ingrahamii (strain DSM 17664 / CCUG 51855 / 37)).